Consider the following 320-residue polypeptide: Biotin synthase (320 aa).

The region spanning 43–270 (GAVQKSQLLS…KSWVRLSAGR (228 aa)) is the Radical SAM core domain. 3 residues coordinate [4Fe-4S] cluster: Cys58, Cys62, and Cys65. Cys102, Cys133, Cys193, and Arg265 together coordinate [2Fe-2S] cluster.

This sequence belongs to the radical SAM superfamily. Biotin synthase family. Homodimer. [4Fe-4S] cluster is required as a cofactor. The cofactor is [2Fe-2S] cluster.

It carries out the reaction (4R,5S)-dethiobiotin + (sulfur carrier)-SH + 2 reduced [2Fe-2S]-[ferredoxin] + 2 S-adenosyl-L-methionine = (sulfur carrier)-H + biotin + 2 5'-deoxyadenosine + 2 L-methionine + 2 oxidized [2Fe-2S]-[ferredoxin]. It participates in cofactor biosynthesis; biotin biosynthesis; biotin from 7,8-diaminononanoate: step 2/2. Its function is as follows. Catalyzes the conversion of dethiobiotin (DTB) to biotin by the insertion of a sulfur atom into dethiobiotin via a radical-based mechanism. In Hyphomonas neptunium (strain ATCC 15444), this protein is Biotin synthase.